We begin with the raw amino-acid sequence, 484 residues long: Probable glycine dehydrogenase (decarboxylating) subunit 2 (484 aa).

K264 is modified (N6-(pyridoxal phosphate)lysine).

It belongs to the GcvP family. C-terminal subunit subfamily. The glycine cleavage system is composed of four proteins: P, T, L and H. In this organism, the P 'protein' is a heterodimer of two subunits. Requires pyridoxal 5'-phosphate as cofactor.

The enzyme catalyses N(6)-[(R)-lipoyl]-L-lysyl-[glycine-cleavage complex H protein] + glycine + H(+) = N(6)-[(R)-S(8)-aminomethyldihydrolipoyl]-L-lysyl-[glycine-cleavage complex H protein] + CO2. The glycine cleavage system catalyzes the degradation of glycine. The P protein binds the alpha-amino group of glycine through its pyridoxal phosphate cofactor; CO(2) is released and the remaining methylamine moiety is then transferred to the lipoamide cofactor of the H protein. The polypeptide is Probable glycine dehydrogenase (decarboxylating) subunit 2 (Legionella pneumophila (strain Lens)).